Reading from the N-terminus, the 178-residue chain is Caveolin-1 (178 aa).

Position 2 is an N-acetylserine (Ser2). Ser2 is subject to Phosphoserine. Positions 2 to 94 are required for homooligomerization; the sequence is SGGKYIDSEG…WKASFTTFTV (93 aa). At 2–104 the chain is on the cytoplasmic side; that stretch reads SGGKYIDSEG…TKYWFYRLLS (103 aa). Lys5 is subject to N6-acetyllysine; alternate. Residue Lys5 forms a Glycyl lysine isopeptide (Lys-Gly) (interchain with G-Cter in ubiquitin); alternate linkage. Residue Tyr6 is modified to Phosphotyrosine. Residue Ser9 is modified to Phosphoserine. At Tyr14 the chain carries Phosphotyrosine; by ABL1. Tyr25 is modified (phosphotyrosine). Residues Lys26, Lys30, Lys39, Lys47, and Lys57 each participate in a glycyl lysine isopeptide (Lys-Gly) (interchain with G-Cter in ubiquitin) cross-link. The interval 82–94 is interaction with CAVIN3; that stretch reads DGIWKASFTTFTV. An intramembrane region (helical) is located at residues 105–125; sequence ALFGIPMALIWGIYFAILSFL. At 126–178 the chain is on the cytoplasmic side; sequence HIWAVVPCIRSYLIEIQCISRIYSICIHTFCDPLFEAIGKIFSNVRIALQKEI. Positions 131–142 are interacts with SPRY1, SPRY2, SPRY3 and SPRY4; the sequence is VPCIRSYLIEIQ. 3 S-palmitoyl cysteine lipidation sites follow: Cys133, Cys143, and Cys156. The interval 149 to 160 is interacts with SPRY1, SPRY2, and SPRY4; the sequence is SICIHTFCDPLF. The interacts with SPRY1, SPRY2, SPRY3 and SPRY4 stretch occupies residues 167-178; that stretch reads FSNVRIALQKEI.

The protein belongs to the caveolin family. In terms of assembly, homooligomer. Interacts with GLIPR2. Interacts with NOSTRIN. Interacts with SNAP25 and STX1A. Interacts (via the N-terminus) with DPP4; the interaction is direct. Interacts with CTNNB1, CDH1 and JUP. Interacts with PACSIN2; this interaction induces membrane tubulation. Interacts with SLC7A9. Interacts with BMX and BTK. Interacts with TGFBR1. Interacts with CAVIN3 (via leucine-zipper domain) in a cholesterol-sensitive manner. Interacts with CAVIN1. Interacts with EHD2 in a cholesterol-dependent manner. Forms a ternary complex with UBXN6 and VCP; mediates CAV1 targeting to lysosomes for degradation. Interacts with ABCG1; this interaction regulates ABCG1-mediated cholesterol efflux. Interacts with NEU3; this interaction enhances NEU3 sialidase activity within caveola. Interacts (via C-terminus) with SPRY1, SPRY2 (via C-terminus), SPRY3, and SPRY4. Interacts with IGFBP5; this interaction allows trafficking of IGFBP5 from the plasma membrane to the nucleus. In terms of processing, phosphorylated at Tyr-14 by ABL1 in response to oxidative stress. Ubiquitinated. Undergo monoubiquitination and multi- and/or polyubiquitination. Monoubiquitination of N-terminal lysines promotes integration in a ternary complex with UBXN6 and VCP which promotes oligomeric CAV1 targeting to lysosomes for degradation. Ubiquitinated by ZNRF1; leading to degradation and modulation of the TLR4-mediated immune response.

Its subcellular location is the golgi apparatus membrane. It is found in the cell membrane. The protein localises to the membrane. It localises to the caveola. The protein resides in the membrane raft. In terms of biological role, may act as a scaffolding protein within caveolar membranes. Forms a stable heterooligomeric complex with CAV2 that targets to lipid rafts and drives caveolae formation. Mediates the recruitment of CAVIN proteins (CAVIN1/2/3/4) to the caveolae. Interacts directly with G-protein alpha subunits and can functionally regulate their activity. Involved in the costimulatory signal essential for T-cell receptor (TCR)-mediated T-cell activation. Its binding to DPP4 induces T-cell proliferation and NF-kappa-B activation in a T-cell receptor/CD3-dependent manner. Recruits CTNNB1 to caveolar membranes and may regulate CTNNB1-mediated signaling through the Wnt pathway. Negatively regulates TGFB1-mediated activation of SMAD2/3 by mediating the internalization of TGFBR1 from membrane rafts leading to its subsequent degradation. Binds 20(S)-hydroxycholesterol (20(S)-OHC). This chain is Caveolin-1 (CAV1), found in Didelphis virginiana (North American opossum).